The sequence spans 161 residues: Nucleotide-binding protein PSEEN4469 (161 aa).

The protein belongs to the YajQ family.

Functionally, nucleotide-binding protein. The polypeptide is Nucleotide-binding protein PSEEN4469 (Pseudomonas entomophila (strain L48)).